The following is a 315-amino-acid chain: NAD(P)H-dependent anabolic L-arginine dehydrogenase DauB (315 aa).

Belongs to the ornithine cyclodeaminase/mu-crystallin family.

It catalyses the reaction L-arginine + NAD(+) + H2O = 5-guanidino-2-oxopentanoate + NH4(+) + NADH + H(+). It carries out the reaction L-arginine + NADP(+) + H2O = 5-guanidino-2-oxopentanoate + NH4(+) + NADPH + H(+). Involved in the anabolism of D-lysine and D-arginine. Under aerobic conditions, the arginine succinyltransferase (AST) and arginine transaminase (ATA) pathways are 2 major routes for L-arginine utilization as the sole source of carbon and nitrogen. The D-to-L racemization of arginine by DauA and DauB is necessary, before to be channeled into the AST and/or ATA pathways. DauB catalyzes the synthesis of L-arginine from 2-ketoarginine (2-KA) and ammonium. The sequence is that of NAD(P)H-dependent anabolic L-arginine dehydrogenase DauB from Pseudomonas aeruginosa (strain ATCC 15692 / DSM 22644 / CIP 104116 / JCM 14847 / LMG 12228 / 1C / PRS 101 / PAO1).